Here is a 239-residue protein sequence, read N- to C-terminus: LexA repressor (239 aa).

The H-T-H motif DNA-binding region spans 26–46; sequence FDEMKDALDLKSKSGIHRLIT. Catalysis depends on for autocatalytic cleavage activity residues Ser160 and Lys198.

This sequence belongs to the peptidase S24 family. In terms of assembly, homodimer.

The enzyme catalyses Hydrolysis of Ala-|-Gly bond in repressor LexA.. Its function is as follows. Represses a number of genes involved in the response to DNA damage (SOS response), including recA and lexA. In the presence of single-stranded DNA, RecA interacts with LexA causing an autocatalytic cleavage which disrupts the DNA-binding part of LexA, leading to derepression of the SOS regulon and eventually DNA repair. The sequence is that of LexA repressor from Methylobacterium sp. (strain 4-46).